A 234-amino-acid polypeptide reads, in one-letter code: Phosphoglycolate phosphatase (234 aa).

Asp-15 acts as the Nucleophile in catalysis. Asp-15, Asp-17, and Asp-177 together coordinate Mg(2+).

Belongs to the HAD-like hydrolase superfamily. CbbY/CbbZ/Gph/YieH family. Monomer. The cofactor is Mg(2+). Requires chloride as cofactor.

It carries out the reaction 2-phosphoglycolate + H2O = glycolate + phosphate. The protein operates within organic acid metabolism; glycolate biosynthesis; glycolate from 2-phosphoglycolate: step 1/1. In terms of biological role, specifically catalyzes the dephosphorylation of 2-phosphoglycolate. Is involved in the dissimilation of the intracellular 2-phosphoglycolate formed during the DNA repair of 3'-phosphoglycolate ends, a major class of DNA lesions induced by oxidative stress. This Photorhabdus laumondii subsp. laumondii (strain DSM 15139 / CIP 105565 / TT01) (Photorhabdus luminescens subsp. laumondii) protein is Phosphoglycolate phosphatase.